Consider the following 185-residue polypeptide: Peptidyl-tRNA hydrolase (185 aa).

Residue tyrosine 14 participates in tRNA binding. Histidine 19 (proton acceptor) is an active-site residue. Positions 64, 66, and 112 each coordinate tRNA.

Belongs to the PTH family. In terms of assembly, monomer.

The protein localises to the cytoplasm. The enzyme catalyses an N-acyl-L-alpha-aminoacyl-tRNA + H2O = an N-acyl-L-amino acid + a tRNA + H(+). In terms of biological role, hydrolyzes ribosome-free peptidyl-tRNAs (with 1 or more amino acids incorporated), which drop off the ribosome during protein synthesis, or as a result of ribosome stalling. Catalyzes the release of premature peptidyl moieties from peptidyl-tRNA molecules trapped in stalled 50S ribosomal subunits, and thus maintains levels of free tRNAs and 50S ribosomes. The polypeptide is Peptidyl-tRNA hydrolase (Pediococcus pentosaceus (strain ATCC 25745 / CCUG 21536 / LMG 10740 / 183-1w)).